Consider the following 324-residue polypeptide: MKKIGIAITDPEDWTARALITAAKEKGFFPFILDLRIAEVSISSKTSEPATLFKAGEILLSDLDALIVRDVGAGAFEGVSFRFDILRELEAGGVTVMNSPEAIQNAANKYHASYLLARAGLPVPETVAVQSVEAALRAASGFGDAVIKPVFGYKGKDIARVKDGEIRFSDRKTGPGTVEEILEKLLEERGMLYIQEFIENPGRDIRAFVVGGKAIGAIYRKAAAGSWVNNLSRGGSADRCVLAEEQKEIAEKAALAVGTTFAGIDIIEGAKAQTGNENKKTEDKSTGQGSRILEVNGTPSGKGIFDAWGINPAEYILEYLQNIL.

Residues 113-321 (SYLLARAGLP…PAEYILEYLQ (209 aa)) enclose the ATP-grasp domain. ATP-binding positions include lysine 148, 195 to 204 (QEFIENPGRD), and arginine 220. A Mg(2+)-binding site is contributed by aspartate 265. Mn(2+) is bound at residue aspartate 265. The disordered stretch occupies residues 274-293 (TGNENKKTEDKSTGQGSRIL). Residues glutamate 294 and asparagine 296 each contribute to the Mg(2+) site. Mn(2+) contacts are provided by glutamate 294 and asparagine 296.

It belongs to the RimK family. MptN subfamily. As to quaternary structure, homodimer. Requires Mg(2+) as cofactor. The cofactor is Mn(2+).

The catalysed reaction is 5,6,7,8-tetrahydromethanopterin + L-glutamate + ATP = 5,6,7,8-tetrahydrosarcinapterin + ADP + phosphate + H(+). Its pathway is cofactor biosynthesis; 5,6,7,8-tetrahydrosarcinapterin biosynthesis. Its function is as follows. Catalyzes the ATP or GTP-dependent addition of one L-glutamate molecule to tetrahydromethanopterin, producing tetrahydrosarcinapterin. This chain is Tetrahydromethanopterin:alpha-L-glutamate ligase (mptN), found in Methanosarcina acetivorans (strain ATCC 35395 / DSM 2834 / JCM 12185 / C2A).